A 144-amino-acid chain; its full sequence is RNA-binding protein 1 (144 aa).

The 74-residue stretch at 11 to 84 (CKVYVGNLGS…TRIRVEMSSG (74 aa)) folds into the RRM domain. Residues 78-115 (RVEMSSGRSRDRRRGEGGSSGRSGSGRYRITPSARTTS) are disordered.

It belongs to the splicing factor SR family. In terms of assembly, interacts with x16 (via Arg/Ser-rich region). In terms of processing, extensively phosphorylated on serine residues in the RS domain. Post-translationally, the tandem heptapeptide repeats in the C-terminal domain (CTD) can be highly phosphorylated. The phosphorylation activates Pol II. Phosphorylation occurs at residues 'Ser-2', 'Ser-5' and 'Ser-7' of the heptapeptide repeat and is mediated by P-TEFb. Dephosphorylated by the INTAC complex when transcripts are unfavorably configured for transcriptional elongation, leading to premature transcription termination: dephosphorylation is mediated by the mts/PP2A component of the INTAC complex. In terms of tissue distribution, ubiquitous.

The protein localises to the nucleus. Functionally, contributes to the activation of female-specific DSX splicing in vivo by recognizing the RBP1 target sequences within the purine-rich polypyrimidine tract of the female-specific 3' splice site. This Drosophila melanogaster (Fruit fly) protein is RNA-binding protein 1 (Rbp1).